The following is a 482-amino-acid chain: tRNA sulfurtransferase (482 aa).

The THUMP domain occupies Leu-61–Arg-165. Residues Leu-183–Ile-184, Lys-265, Gly-287, and Gln-296 contribute to the ATP site. Cys-344 and Cys-456 are oxidised to a cystine. One can recognise a Rhodanese domain in the interval Phe-404 to Pro-482. Cys-456 acts as the Cysteine persulfide intermediate in catalysis.

It belongs to the ThiI family.

The protein resides in the cytoplasm. The enzyme catalyses [ThiI sulfur-carrier protein]-S-sulfanyl-L-cysteine + a uridine in tRNA + 2 reduced [2Fe-2S]-[ferredoxin] + ATP + H(+) = [ThiI sulfur-carrier protein]-L-cysteine + a 4-thiouridine in tRNA + 2 oxidized [2Fe-2S]-[ferredoxin] + AMP + diphosphate. The catalysed reaction is [ThiS sulfur-carrier protein]-C-terminal Gly-Gly-AMP + S-sulfanyl-L-cysteinyl-[cysteine desulfurase] + AH2 = [ThiS sulfur-carrier protein]-C-terminal-Gly-aminoethanethioate + L-cysteinyl-[cysteine desulfurase] + A + AMP + 2 H(+). It participates in cofactor biosynthesis; thiamine diphosphate biosynthesis. In terms of biological role, catalyzes the ATP-dependent transfer of a sulfur to tRNA to produce 4-thiouridine in position 8 of tRNAs, which functions as a near-UV photosensor. Also catalyzes the transfer of sulfur to the sulfur carrier protein ThiS, forming ThiS-thiocarboxylate. This is a step in the synthesis of thiazole, in the thiamine biosynthesis pathway. The sulfur is donated as persulfide by IscS. The polypeptide is tRNA sulfurtransferase (Citrobacter koseri (strain ATCC BAA-895 / CDC 4225-83 / SGSC4696)).